The sequence spans 720 residues: Putative fatty acid oxidation complex trifunctional enzyme (720 aa).

The interval 1 to 384 is 3-hydroxyacyl-CoA dehydrogenase; sequence MQNEIKKVCV…SWKYGPFELL (384 aa). Residues 453-720 are enoyl-CoA hydratase/isomerase; it reads FVITTKMNCL…TIEKLKAIVK (268 aa).

The protein in the N-terminal section; belongs to the 3-hydroxyacyl-CoA dehydrogenase family. In the C-terminal section; belongs to the enoyl-CoA hydratase/isomerase family.

The catalysed reaction is a (3S)-3-hydroxyacyl-CoA + NAD(+) = a 3-oxoacyl-CoA + NADH + H(+). It catalyses the reaction a (3S)-3-hydroxyacyl-CoA = a (2E)-enoyl-CoA + H2O. It carries out the reaction a 4-saturated-(3S)-3-hydroxyacyl-CoA = a (3E)-enoyl-CoA + H2O. The enzyme catalyses a (3Z)-enoyl-CoA = a 4-saturated (2E)-enoyl-CoA. The catalysed reaction is a (3E)-enoyl-CoA = a 4-saturated (2E)-enoyl-CoA. In Rickettsia felis (strain ATCC VR-1525 / URRWXCal2) (Rickettsia azadi), this protein is Putative fatty acid oxidation complex trifunctional enzyme.